Consider the following 276-residue polypeptide: Phosphonates import ATP-binding protein PhnC (276 aa).

The ABC transporter domain maps to L2–D246. G35–S42 is an ATP binding site.

The protein belongs to the ABC transporter superfamily. Phosphonates importer (TC 3.A.1.9.1) family. In terms of assembly, the complex is composed of two ATP-binding proteins (PhnC), two transmembrane proteins (PhnE) and a solute-binding protein (PhnD).

The protein localises to the cell inner membrane. It carries out the reaction phosphonate(out) + ATP + H2O = phosphonate(in) + ADP + phosphate + H(+). Part of the ABC transporter complex PhnCDE involved in phosphonates import. Responsible for energy coupling to the transport system. In Alcaligenes faecalis, this protein is Phosphonates import ATP-binding protein PhnC.